The primary structure comprises 65 residues: Large ribosomal subunit protein uL29 (65 aa).

This sequence belongs to the universal ribosomal protein uL29 family.

This Buchnera aphidicola subsp. Acyrthosiphon pisum (strain APS) (Acyrthosiphon pisum symbiotic bacterium) protein is Large ribosomal subunit protein uL29 (rpmC).